Consider the following 83-residue polypeptide: MYB-like transcription factor ETC1 (83 aa).

Residues 35-72 (AQEEEDLICRMYKLVGERWDLIAGRIPGRTAEEIERFW) form the Myb-like domain.

In terms of tissue distribution, expressed in developing trichomes and non-root hair cells.

The protein resides in the nucleus. MYB-type transcription factor involved in epidermal cell fate specification. Acts as a negative regulator of trichome development, by mediating lateral inhibition. Promotes the formation of hair developing cells in H position in root epidermis, probably by inhibiting non-hair cell formation. This chain is MYB-like transcription factor ETC1 (ETC1), found in Arabidopsis thaliana (Mouse-ear cress).